Here is a 141-residue protein sequence, read N- to C-terminus: Extracellular globin-1 (141 aa).

A Globin domain is found at 1 to 141 (DCNTLKRFKV…YAVIAAGIKP (141 aa)). The cysteines at positions 2 and 131 are disulfide-linked. Histidine 94 is a binding site for heme b.

It belongs to the globin family. In terms of assembly, the giant hemoglobins of worms are formed of a monomeric subunit and a disulfide-bonded trimer. This subunit is monomeric.

The protein resides in the secreted. The protein is Extracellular globin-1 of Metaphire sieboldi (Earthworm).